Reading from the N-terminus, the 171-residue chain is UPF0398 protein SPy_1647/M5005_Spy1353 (171 aa).

It belongs to the UPF0398 family.

The polypeptide is UPF0398 protein SPy_1647/M5005_Spy1353 (Streptococcus pyogenes serotype M1).